A 188-amino-acid chain; its full sequence is FMN-dependent NADPH-azoreductase (188 aa).

This sequence belongs to the azoreductase type 2 family. In terms of assembly, homotetramer. FMN serves as cofactor.

In terms of biological role, catalyzes the reductive cleavage of azo bond in aromatic azo compounds to the corresponding amines. Requires NADPH, but not NADH, as an electron donor for its activity. The sequence is that of FMN-dependent NADPH-azoreductase (azo1) from Staphylococcus haemolyticus (strain JCSC1435).